We begin with the raw amino-acid sequence, 1178 residues long: Mannosyltransferase regulator 4 (1178 aa).

Residues 1-27 (MLQRISSKLHRRFLSGLLRVKHYPLRR) lie on the Cytoplasmic side of the membrane. The helical; Signal-anchor for type II membrane protein transmembrane segment at 28 to 48 (ILLPLILLQIIIITFIWSNSP) threads the bilayer. At 49–1178 (QRNGLGRDAD…KKKQEEGHSN (1130 aa)) the chain is on the lumenal side. Residues 519 to 521 (DFD) carry the DXD motif. A disordered region spans residues 1041-1178 (EKKKKEEEEK…KKKQEEGHSN (138 aa)). Tandem repeats lie at residues 1042 to 1049 (KKKKEEEE), 1050 to 1057 (KKKKEEEE), 1058 to 1065 (KKKKEEEE), 1066 to 1073 (KKKKEEEE), 1074 to 1081 (KKKKEEEE), and 1082 to 1089 (KKKKEEEE). The 17 X 8 AA tandem repeats of K-K-K-K-E-E-E-E stretch occupies residues 1042-1174 (KKKKEEEEKK…EEEEKKKQEE (133 aa)). The 7; approximate repeat unit spans residues 1090 to 1097 (KKKQEEEE). Repeat unit 8 spans residues 1098–1105 (KKKKEEEE). The 9; approximate repeat unit spans residues 1106–1113 (KKKQEEGE). One copy of the 10; approximate repeat lies at 1114 to 1121 (KMKNEDEE). The stretch at 1122–1129 (NKKNEDEE) is one 11; approximate repeat. Repeat unit 12 spans residues 1130-1137 (KKKNEEEE). Residues 1138 to 1144 (KKKQEEK) form a 13; approximate repeat. One copy of the 14; approximate repeat lies at 1145 to 1152 (NKKNEDEE). Residues 1153 to 1160 (KKKQEEEE) form a 15; approximate repeat. The stretch at 1161–1168 (KKKNEEEE) is one 16; approximate repeat. The stretch at 1169–1174 (KKKQEE) is one 17; truncated repeat.

The protein belongs to the MNN4 family.

Its subcellular location is the golgi apparatus membrane. Its function is as follows. Golgi apparatus protein involved in N-glycan mannosylphosphorylation. While MNN4 seems to have a regulatory role in N-glycan mannosylphosphorylation, a transferase activity of MNN4 can not be ruled out. Mediates mannosylphosphate transfer in both the core and outer chain portions of N-linked oligosaccharides. Has partially redundant function with MNN14. The sequence is that of Mannosyltransferase regulator 4 from Saccharomyces cerevisiae (strain ATCC 204508 / S288c) (Baker's yeast).